The primary structure comprises 190 residues: Lipid A acyltransferase PagP (190 aa).

A signal peptide spans 1–29 (MYVAMIIRKYFLIIALLVMPWLAIPSVSA). Active-site residues include histidine 62, aspartate 105, and serine 106.

This sequence belongs to the lipid A palmitoyltransferase family. Homodimer.

It localises to the cell outer membrane. It catalyses the reaction a lipid A + a 1,2-diacyl-sn-glycero-3-phosphocholine = a hepta-acyl lipid A + a 2-acyl-sn-glycero-3-phosphocholine. The enzyme catalyses a lipid IVA + a 1,2-diacyl-sn-glycero-3-phosphocholine = a lipid IVB + a 2-acyl-sn-glycero-3-phosphocholine. The catalysed reaction is a lipid IIA + a 1,2-diacyl-sn-glycero-3-phosphocholine = a lipid IIB + a 2-acyl-sn-glycero-3-phosphocholine. Functionally, transfers a fatty acid residue from the sn-1 position of a phospholipid to the N-linked hydroxyfatty acid chain on the proximal unit of lipid A or its precursors. This chain is Lipid A acyltransferase PagP, found in Salmonella typhi.